Reading from the N-terminus, the 164-residue chain is 2S albumin seed storage protein PINP1 (164 aa).

The signal sequence occupies residues 1-29; sequence MGVFSSPMSTLRWVTLFAALLSLLEWGTA. Residues 92-107 are compositionally biased toward low complexity; the sequence is DQSQSYDSSTDSDSQD. The segment at 92–137 is disordered; the sequence is DQSQSYDSSTDSDSQDGAPLNQRRRRRGEGRGREEEEAVERAEELP. The segment covering 120–137 has biased composition (basic and acidic residues); that stretch reads EGRGREEEEAVERAEELP. N-linked (GalNAc...) asparagine glycosylation occurs at Asn-138.

It belongs to the 2S seed storage albumins family.

This is 2S albumin seed storage protein PINP1 from Pinus pinea (Italian stone pine).